Here is a 129-residue protein sequence, read N- to C-terminus: Serum amyloid A-4 protein (129 aa).

A signal peptide spans 1–18 (MKLLIGILFCTLIMGVTG). Over residues 107-121 (AEEWGRSGQDPDHFR) the composition is skewed to basic and acidic residues. Residues 107–129 (AEEWGRSGQDPDHFRPAGLPKKY) are disordered.

It belongs to the SAA family. Apolipoprotein of the HDL complex.

The protein localises to the secreted. Major acute phase reactant. This is Serum amyloid A-4 protein from Bos taurus (Bovine).